The primary structure comprises 261 residues: Cytochrome c oxidase subunit 3 (261 aa).

Residues 1 to 15 (MAHQAHAYHMVDPSP) are Mitochondrial matrix-facing. A helical transmembrane segment spans residues 16–34 (WPLTGAVAALLLTSGLAIW). Residues 35 to 40 (FPFNSL) lie on the Mitochondrial intermembrane side of the membrane. Residues 41–66 (ILLTLGLVLLLLTMYQWWRDIVREGT) form a helical membrane-spanning segment. The Mitochondrial matrix portion of the chain corresponds to 67–72 (FQGHHT). A helical transmembrane segment spans residues 73 to 105 (PPVQKGLRYGMILFITSEVFFFLGFFWAFYHSS). The Mitochondrial intermembrane segment spans residues 106–128 (LAPTPELGGCWPPTGIVPLNPFE). The helical transmembrane segment at 129-152 (VPLLNTAVLLASGVTVTWAHHSIM) threads the bilayer. At 153 to 155 (EGE) the chain is on the mitochondrial matrix side. Residues 156-183 (RKQAIHSLTLTILLGFYFTFLQAMEYYE) traverse the membrane as a helical segment. The Mitochondrial intermembrane segment spans residues 184 to 190 (APFTIAD). A helical transmembrane segment spans residues 191-223 (GVYGSTFFVATGFHGLHVIIGSTFLAICLLRQI). The Mitochondrial matrix portion of the chain corresponds to 224–232 (RYHFTSEHH). A helical transmembrane segment spans residues 233–256 (FGFEAAAWYWHFVDVVWLFLYISI). Over 257-261 (YWWGS) the chain is Mitochondrial intermembrane.

It belongs to the cytochrome c oxidase subunit 3 family. Component of the cytochrome c oxidase (complex IV, CIV), a multisubunit enzyme composed of 14 subunits. The complex is composed of a catalytic core of 3 subunits MT-CO1, MT-CO2 and MT-CO3, encoded in the mitochondrial DNA, and 11 supernumerary subunits COX4I, COX5A, COX5B, COX6A, COX6B, COX6C, COX7A, COX7B, COX7C, COX8 and NDUFA4, which are encoded in the nuclear genome. The complex exists as a monomer or a dimer and forms supercomplexes (SCs) in the inner mitochondrial membrane with NADH-ubiquinone oxidoreductase (complex I, CI) and ubiquinol-cytochrome c oxidoreductase (cytochrome b-c1 complex, complex III, CIII), resulting in different assemblies (supercomplex SCI(1)III(2)IV(1) and megacomplex MCI(2)III(2)IV(2)).

Its subcellular location is the mitochondrion inner membrane. It catalyses the reaction 4 Fe(II)-[cytochrome c] + O2 + 8 H(+)(in) = 4 Fe(III)-[cytochrome c] + 2 H2O + 4 H(+)(out). In terms of biological role, component of the cytochrome c oxidase, the last enzyme in the mitochondrial electron transport chain which drives oxidative phosphorylation. The respiratory chain contains 3 multisubunit complexes succinate dehydrogenase (complex II, CII), ubiquinol-cytochrome c oxidoreductase (cytochrome b-c1 complex, complex III, CIII) and cytochrome c oxidase (complex IV, CIV), that cooperate to transfer electrons derived from NADH and succinate to molecular oxygen, creating an electrochemical gradient over the inner membrane that drives transmembrane transport and the ATP synthase. Cytochrome c oxidase is the component of the respiratory chain that catalyzes the reduction of oxygen to water. Electrons originating from reduced cytochrome c in the intermembrane space (IMS) are transferred via the dinuclear copper A center (CU(A)) of subunit 2 and heme A of subunit 1 to the active site in subunit 1, a binuclear center (BNC) formed by heme A3 and copper B (CU(B)). The BNC reduces molecular oxygen to 2 water molecules using 4 electrons from cytochrome c in the IMS and 4 protons from the mitochondrial matrix. This chain is Cytochrome c oxidase subunit 3 (mt-co3), found in Tetraodon nigroviridis (Spotted green pufferfish).